We begin with the raw amino-acid sequence, 417 residues long: Lipoyl synthase, mitochondrial (417 aa).

The transit peptide at methionine 1–phenylalanine 30 directs the protein to the mitochondrion. The interval serine 23 to glycine 62 is disordered. Polar residues-rich tracts occupy residues phenylalanine 30 to valine 41 and proline 51 to alanine 61. Residues cysteine 132, cysteine 137, cysteine 143, cysteine 163, cysteine 167, cysteine 170, and serine 378 each contribute to the [4Fe-4S] cluster site. Residues glycine 146–leucine 367 form the Radical SAM core domain.

This sequence belongs to the radical SAM superfamily. Lipoyl synthase family. [4Fe-4S] cluster serves as cofactor.

It is found in the mitochondrion. It catalyses the reaction [[Fe-S] cluster scaffold protein carrying a second [4Fe-4S](2+) cluster] + N(6)-octanoyl-L-lysyl-[protein] + 2 oxidized [2Fe-2S]-[ferredoxin] + 2 S-adenosyl-L-methionine + 4 H(+) = [[Fe-S] cluster scaffold protein] + N(6)-[(R)-dihydrolipoyl]-L-lysyl-[protein] + 4 Fe(3+) + 2 hydrogen sulfide + 2 5'-deoxyadenosine + 2 L-methionine + 2 reduced [2Fe-2S]-[ferredoxin]. Its pathway is protein modification; protein lipoylation via endogenous pathway; protein N(6)-(lipoyl)lysine from octanoyl-[acyl-carrier-protein]: step 2/2. Its function is as follows. Catalyzes the radical-mediated insertion of two sulfur atoms into the C-6 and C-8 positions of the octanoyl moiety bound to the lipoyl domains of lipoate-dependent enzymes, thereby converting the octanoylated domains into lipoylated derivatives. This is Lipoyl synthase, mitochondrial from Pyrenophora tritici-repentis (strain Pt-1C-BFP) (Wheat tan spot fungus).